Here is a 260-residue protein sequence, read N- to C-terminus: Triosephosphate isomerase (260 aa).

Asparagine 11 to lysine 13 contacts substrate. Catalysis depends on histidine 103, which acts as the Electrophile. Glutamate 175 (proton acceptor) is an active-site residue. Residues glycine 181, serine 220, and glycine 241 to glycine 242 contribute to the substrate site.

It belongs to the triosephosphate isomerase family. In terms of assembly, homodimer.

The protein localises to the cytoplasm. The catalysed reaction is D-glyceraldehyde 3-phosphate = dihydroxyacetone phosphate. It functions in the pathway carbohydrate biosynthesis; gluconeogenesis. It participates in carbohydrate degradation; glycolysis; D-glyceraldehyde 3-phosphate from glycerone phosphate: step 1/1. In terms of biological role, involved in the gluconeogenesis. Catalyzes stereospecifically the conversion of dihydroxyacetone phosphate (DHAP) to D-glyceraldehyde-3-phosphate (G3P). In Shewanella sediminis (strain HAW-EB3), this protein is Triosephosphate isomerase.